A 446-amino-acid polypeptide reads, in one-letter code: Deoxyguanosinetriphosphate triphosphohydrolase-like protein (446 aa).

The segment at 1–28 (MSSSVWQERRHGEDKQRRNDHRSPFQRD) is disordered. Positions 7 to 28 (QERRHGEDKQRRNDHRSPFQRD) are enriched in basic and acidic residues. Positions 59-252 (RLTHSLEVSQ…MELADDIAYA (194 aa)) constitute an HD domain.

Belongs to the dGTPase family. Type 2 subfamily.

This Shewanella sp. (strain ANA-3) protein is Deoxyguanosinetriphosphate triphosphohydrolase-like protein.